Here is a 166-residue protein sequence, read N- to C-terminus: Large ribosomal subunit protein mL49 (166 aa).

Positions 54–77 are disordered; that stretch reads PTKIPEPPKHKHYPTPSGWQPPRD.

The protein belongs to the mitochondrion-specific ribosomal protein mL49 family. In terms of assembly, component of the mitochondrial ribosome large subunit (39S) which comprises a 16S rRNA and about 50 distinct proteins. Interacts with OXA1L.

The protein resides in the mitochondrion. The polypeptide is Large ribosomal subunit protein mL49 (Mrpl49) (Mus musculus (Mouse)).